The chain runs to 118 residues: Integration host factor subunit alpha (118 aa).

Positions 97-118 (NGAMPMSTEESDENTAQSASGG) are disordered.

Belongs to the bacterial histone-like protein family. As to quaternary structure, heterodimer of an alpha and a beta chain.

Its function is as follows. This protein is one of the two subunits of integration host factor, a specific DNA-binding protein that functions in genetic recombination as well as in transcriptional and translational control. This is Integration host factor subunit alpha from Rhodopseudomonas palustris (strain ATCC BAA-98 / CGA009).